Here is a 324-residue protein sequence, read N- to C-terminus: MAEQYADKQIKLFSLTANREIAEKISQASGIPLGKMSSRQFSDGEIMINIEETVRGDDIYIIQSTSFPVNDNLWELLIMIDACKRASANTVNIVVPYFGYSRQDRIAASREPITAKLVANMLVKAGVDRVLTLDLHAVQVQGFFDIPVDNLFTVPLFAEHYNQLGLSGEDVVVVSPKNSGIKRARSLAEYLDSPIAIIDYAQDDSEREEGYIIGEVEGKKAIIIDDILNTGKTFAEAAKILERGGATEIYAVASHGLFAGGAADILESAPIREIIVTDSVLSKERIPSNIKYLTASHLIADAIIRIHERKPLSPLFSYRSDKKD.

Residues 43 to 45 and 102 to 103 each bind ATP; these read DGE and RQ. His-136 provides a ligand contact to Mg(2+). Residues Asp-225 and 229–233 each bind D-ribose 5-phosphate; that span reads NTGKT.

This sequence belongs to the ribose-phosphate pyrophosphokinase family. Class I subfamily. As to quaternary structure, homohexamer. The cofactor is Mg(2+).

It localises to the cytoplasm. It catalyses the reaction D-ribose 5-phosphate + ATP = 5-phospho-alpha-D-ribose 1-diphosphate + AMP + H(+). Its pathway is metabolic intermediate biosynthesis; 5-phospho-alpha-D-ribose 1-diphosphate biosynthesis; 5-phospho-alpha-D-ribose 1-diphosphate from D-ribose 5-phosphate (route I): step 1/1. Involved in the biosynthesis of the central metabolite phospho-alpha-D-ribosyl-1-pyrophosphate (PRPP) via the transfer of pyrophosphoryl group from ATP to 1-hydroxyl of ribose-5-phosphate (Rib-5-P). The chain is Putative ribose-phosphate pyrophosphokinase 2 from Streptococcus agalactiae serotype III (strain NEM316).